The sequence spans 37 residues: Cytochrome b6-f complex subunit 5 (37 aa).

Residues 5-25 (LLSGIVLGLIPITLAGLFVTA) form a helical membrane-spanning segment.

It belongs to the PetG family. In terms of assembly, the 4 large subunits of the cytochrome b6-f complex are cytochrome b6, subunit IV (17 kDa polypeptide, PetD), cytochrome f and the Rieske protein, while the 4 small subunits are PetG, PetL, PetM and PetN. The complex functions as a dimer.

The protein localises to the plastid. The protein resides in the chloroplast thylakoid membrane. In terms of biological role, component of the cytochrome b6-f complex, which mediates electron transfer between photosystem II (PSII) and photosystem I (PSI), cyclic electron flow around PSI, and state transitions. PetG is required for either the stability or assembly of the cytochrome b6-f complex. This Chara vulgaris (Common stonewort) protein is Cytochrome b6-f complex subunit 5.